The chain runs to 629 residues: tRNA uridine 5-carboxymethylaminomethyl modification enzyme MnmG (629 aa).

FAD-binding positions include 13–18, Val125, and Ser180; that span reads GGGHAG. Position 273 to 287 (273 to 287) interacts with NAD(+); that stretch reads GPRYCPSIEDKVMRF. Gln370 contacts FAD.

This sequence belongs to the MnmG family. In terms of assembly, homodimer. Heterotetramer of two MnmE and two MnmG subunits. The cofactor is FAD.

It localises to the cytoplasm. Functionally, NAD-binding protein involved in the addition of a carboxymethylaminomethyl (cmnm) group at the wobble position (U34) of certain tRNAs, forming tRNA-cmnm(5)s(2)U34. This is tRNA uridine 5-carboxymethylaminomethyl modification enzyme MnmG from Salmonella agona (strain SL483).